The primary structure comprises 4265 residues: Dynein axonemal heavy chain 1 (4265 aa).

The segment at 1–88 is disordered; that stretch reads MEQPNSKGYS…KSPLTGTDKK (88 aa). The stem stretch occupies residues 1-1542; it reads MEQPNSKGYS…YIRAVNAEFI (1542 aa). Over residues 60 to 69 the composition is skewed to pro residues; it reads PHLPLPPAPP. AAA regions lie at residues 1543-1764, 1824-2057, 2189-2449, and 2547-2799; these read YGYE…VISA, EAIR…SSVK, TMVP…VFQG, and DYNQ…LTRH. The short motif at 1581-1588 is the GPAGTGKT motif element; the sequence is GPAGTGKT. 1581–1588 is an ATP binding site; the sequence is GPAGTGKT. The CFDEFNR motif motif lies at 1631 to 1637; sequence CFDEFNR. Residues 1862-1869, 2227-2234, and 2586-2593 contribute to the ATP site; these read GPTGSGKS, GPTGTGKT, and GVGGSGRS. The segment at 2814 to 3112 is stalk; the sequence is FSILIGQKKL…EELELKCEQC (299 aa). The stretch at 3074 to 3122 forms a coiled coil; that stretch reads LDEAKQRLREVEDGIATMQAKYRECITKKEELELKCEQCEQRLGRAGKL. AAA stretches follow at residues 3197-3427 and 3640-3859; these read LGNP…EIQA and MQDF…QLKM.

The protein belongs to the dynein heavy chain family. As to quaternary structure, consists of at least two heavy chains and a number of intermediate and light chains. In terms of tissue distribution, expressed primarily in trachea and testis, 2 tissues containing axonemal structures. Also expressed in brain.

It localises to the cytoplasm. The protein resides in the cytoskeleton. It is found in the cilium axoneme. Its subcellular location is the cell projection. The protein localises to the cilium. It localises to the flagellum. Its function is as follows. Force generating protein of cilia required for sperm flagellum motility. Produces force towards the minus ends of microtubules. Dynein has ATPase activity; the force-producing power stroke is thought to occur on release of ADP. Required in spermatozoa for the formation of the inner dynein arms and biogenesis of the axoneme. In Homo sapiens (Human), this protein is Dynein axonemal heavy chain 1.